The sequence spans 641 residues: EKIKICLQKQVNSSFSLHNGFGGNLYATEEKRMFELVKPKAGASVLNQSTWIGFGDSRTDKSNPNFPRSADVSVKTANKFRSLTGGSLMLSMFGPPGKVDYLYQGCGKHKVFYEGVNWSPHAAIDCYRKNWTDIKLNFQKNIYELASQSHCMSLVNALDKTIPLQATAGVAGNCNNSFLKNPALYTQKVTPPXXKCGKENLAFFTLPTQFGTYECRLHLVASCYFIYDSKEVYNKRGCDNYFQVIYDSSGKVVGGLDNRVSPYTGNSGDTPTMQCDMIQLKPGRYSVRSSPRFLLMPERSYCFDMKEKGPVTAVQSIWGKDRKSDYAVDQACLSTPGCMLIQKQKPYTGEADDHHGDQEMRELLSGLDYEARCISQSGWVNETSPFTEEYLLPPKFGRCPLAAKEESIPKIPDGLLIPTSGTDTTVTKPKSRIFGIDDLIIGLFFVAIVEAGIGGYLLGSRKESGGGVTKESAEKGFEKIGNDIQILRSSTNIAIEKLNDRISHDEQAIRDLTLEIENARSEALLGELGIIRALLVGNISIGLQESLWELASEITNRAGDLAVEISPGCWIIDNNICDQSCQNFIFKFNETAPVPTIPPLDTKIDLQSDPFYWGSSLGLAITAAISLAALVISGIAICRTK.

The interval 1 to 26 (EKIKICLQKQVNSSFSLHNGFGGNLY) is fusion domain-1. Topologically, residues 1–616 (EKIKICLQKQ…QSDPFYWGSS (616 aa)) are extracellular. 7 cysteine pairs are disulfide-bonded: Cys6–Cys569, Cys106–Cys151, Cys126–Cys174, Cys196–Cys238, Cys215–Cys302, Cys223–Cys275, and Cys332–Cys338. N-linked (GlcNAc...) asparagine; by host glycans are attached at residues Asn12 and Asn47. An esterase domain-1 region spans residues 27-137 (ATEEKRMFEL…RKNWTDIKLN (111 aa)). The active-site Nucleophile is the Ser57. N-linked (GlcNAc...) asparagine; by host glycosylation is present at Asn130. The N-acetyl-9-O-acetylneuraminic acid binding stretch occupies residues 137 to 296 (NFQKNIYELA…VRSSPRFLLM (160 aa)). The tract at residues 297–351 (PERSYCFDMKEKGPVTAVQSIWGKDRKSDYAVDQACLSTPGCMLIQKQKPYTGEA) is esterase domain-2. Residues Asp352 and His355 each act as charge relay system in the active site. Residues 352-637 (DDHHGDQEMR…AALVISGIAI (286 aa)) form a fusion domain-2 region. The N-linked (GlcNAc...) asparagine; by host glycan is linked to Asn381. Residues 617–637 (LGLAITAAISLAALVISGIAI) form a helical membrane-spanning segment. Residues 638–641 (CRTK) are Cytoplasmic-facing.

Belongs to the influenza type C/coronaviruses hemagglutinin-esterase family. Homotrimer of disulfide-linked HEF1-HEF2. In natural infection, inactive HEF is matured into HEF1 and HEF2 outside the cell by one or more trypsin-like, arginine-specific endoprotease.

Its subcellular location is the virion membrane. The protein resides in the host cell membrane. It carries out the reaction N-acetyl-9-O-acetylneuraminate + H2O = N-acetylneuraminate + acetate + H(+). The catalysed reaction is N-acetyl-4-O-acetylneuraminate + H2O = N-acetylneuraminate + acetate + H(+). In terms of biological role, binds to the N-acetyl-9-O-acetylneuraminic acid residues on the cell surface, bringing about the attachment of the virus particle to the cell. Plays a major role in the determination of host range restriction and virulence. Class I viral fusion protein. Responsible for penetration of the virus into the cell cytoplasm by mediating the fusion of the membrane of the endocytosed virus particle with the endosomal membrane. Low pH in endosomes induce an irreversible conformational change in HEF2, releasing the fusion hydrophobic peptide. Several trimers are required to form a competent fusion pore. Displays a receptor-destroying activity which is a neuraminidate-O-acetyl esterase. This activity cleaves off any receptor on the cell surface, which would otherwise prevent virions release. These cleavages prevent self-aggregation and ensure the efficient spread of the progeny virus from cell to cell. The sequence is that of Hemagglutinin-esterase-fusion glycoprotein (HE) from Homo sapiens (Human).